The sequence spans 397 residues: Tryptophan synthase beta chain (397 aa).

Lysine 87 is modified (N6-(pyridoxal phosphate)lysine).

It belongs to the TrpB family. Tetramer of two alpha and two beta chains. Pyridoxal 5'-phosphate is required as a cofactor.

The enzyme catalyses (1S,2R)-1-C-(indol-3-yl)glycerol 3-phosphate + L-serine = D-glyceraldehyde 3-phosphate + L-tryptophan + H2O. The protein operates within amino-acid biosynthesis; L-tryptophan biosynthesis; L-tryptophan from chorismate: step 5/5. The beta subunit is responsible for the synthesis of L-tryptophan from indole and L-serine. The protein is Tryptophan synthase beta chain of Salmonella arizonae (strain ATCC BAA-731 / CDC346-86 / RSK2980).